Consider the following 628-residue polypeptide: 2-oxoacid:ferredoxin oxidoreductase 2, subunit alpha (628 aa).

Residues 254–258 carry the YPITP motif motif; that stretch reads YPITP. Substrate is bound by residues Thr-257 and Arg-344.

As to quaternary structure, heterodimer composed of an alpha and a beta subunit.

It carries out the reaction a 2-oxocarboxylate + 2 oxidized [2Fe-2S]-[ferredoxin] + CoA = an acyl-CoA + 2 reduced [2Fe-2S]-[ferredoxin] + CO2 + H(+). Its function is as follows. Catalyzes the coenzyme A-dependent oxidative decarboxylation of different 2-oxoacids such as 2-oxoglutarate, pyruvate and 2-oxobutyrate to form their CoA derivatives. This Sulfurisphaera tokodaii (strain DSM 16993 / JCM 10545 / NBRC 100140 / 7) (Sulfolobus tokodaii) protein is 2-oxoacid:ferredoxin oxidoreductase 2, subunit alpha.